We begin with the raw amino-acid sequence, 171 residues long: N5-carboxyaminoimidazole ribonucleotide mutase (171 aa).

Positions 13, 16, and 43 each coordinate substrate.

The protein belongs to the AIR carboxylase family. Class I subfamily.

The catalysed reaction is 5-carboxyamino-1-(5-phospho-D-ribosyl)imidazole + H(+) = 5-amino-1-(5-phospho-D-ribosyl)imidazole-4-carboxylate. The protein operates within purine metabolism; IMP biosynthesis via de novo pathway; 5-amino-1-(5-phospho-D-ribosyl)imidazole-4-carboxylate from 5-amino-1-(5-phospho-D-ribosyl)imidazole (N5-CAIR route): step 2/2. Its function is as follows. Catalyzes the conversion of N5-carboxyaminoimidazole ribonucleotide (N5-CAIR) to 4-carboxy-5-aminoimidazole ribonucleotide (CAIR). This is N5-carboxyaminoimidazole ribonucleotide mutase from Mycobacterium leprae (strain TN).